A 167-amino-acid polypeptide reads, in one-letter code: Leptin (167 aa).

The N-terminal stretch at 1–21 (MRCGSLCRFLWLWSCLPYIEA) is a signal peptide. Residues cysteine 117 and cysteine 167 are joined by a disulfide bond.

This sequence belongs to the leptin family.

The protein resides in the secreted. Its function is as follows. Key player in the regulation of energy balance and body weight control. Once released into the circulation, has central and peripheral effects by binding LEPR, found in many tissues, which results in the activation of several major signaling pathways. In the hypothalamus, acts as an appetite-regulating factor that induces a decrease in food intake and an increase in energy consumption by inducing anorexinogenic factors and suppressing orexigenic neuropeptides, also regulates bone mass and secretion of hypothalamo-pituitary-adrenal hormones. In the periphery, increases basal metabolism, influences reproductive function, regulates pancreatic beta-cell function and insulin secretion, is pro-angiogenic for endothelial cell and affects innate and adaptive immunity. In the arcuate nucleus of the hypothalamus, activates by depolarization POMC neurons inducing FOS and SOCS3 expression to release anorexigenic peptides and inhibits by hyperpolarization NPY neurons inducing SOCS3 with a consequent reduction on release of orexigenic peptides. In addition to its known satiety inducing effect, has a modulatory role in nutrient absorption. In the intestine, reduces glucose absorption by enterocytes by activating PKC and leading to a sequential activation of p38, PI3K and ERK signaling pathways which exerts an inhibitory effect on glucose absorption. Acts as a growth factor on certain tissues, through the activation of different signaling pathways increases expression of genes involved in cell cycle regulation such as CCND1, via JAK2-STAT3 pathway, or VEGFA, via MAPK1/3 and PI3K-AKT1 pathways. May also play an apoptotic role via JAK2-STAT3 pathway and up-regulation of BIRC5 expression. Pro-angiogenic, has mitogenic activity on vascular endothelial cells and plays a role in matrix remodeling by regulating the expression of matrix metalloproteinases (MMPs) and tissue inhibitors of metalloproteinases (TIMPs). In innate immunity, modulates the activity and function of neutrophils by increasing chemotaxis and the secretion of oxygen radicals. Increases phagocytosis by macrophages and enhances secretion of pro-inflammatory mediators. Increases cytotoxic ability of NK cells. Plays a pro-inflammatory role, in synergy with IL1B, by inducing NOS2 which promotes the production of IL6, IL8 and Prostaglandin E2, through a signaling pathway that involves JAK2, PI3K, MAP2K1/MEK1 and MAPK14/p38. In adaptive immunity, promotes the switch of memory T-cells towards T helper-1 cell immune responses. Increases CD4(+)CD25(-) T-cell proliferation and reduces autophagy during TCR (T-cell receptor) stimulation, through MTOR signaling pathway activation and BCL2 up-regulation. In Halichoerus grypus (Gray seal), this protein is Leptin (LEP).